We begin with the raw amino-acid sequence, 63 residues long: Large ribosomal subunit protein uL29 (63 aa).

It belongs to the universal ribosomal protein uL29 family.

This chain is Large ribosomal subunit protein uL29, found in Escherichia coli O8 (strain IAI1).